The chain runs to 209 residues: Geminin (209 aa).

Positions 1–79 (MNPSMKQKQE…PESSENKNLG (79 aa)) are disordered. Basic and acidic residues predominate over residues 7 to 16 (QKQEEIKENI). N6-acetyllysine is present on K27. Phosphoserine occurs at positions 34, 36, 49, 63, and 64. Positions 82–161 (TQESFDLMIK…AELIERLNGE (80 aa)) are necessary and sufficient for interaction with IDAS and CDT1. Positions 94 to 144 (PSSQYWKEVAEKRRKALYEALKENEKLHKEIEQKDNEIARLKKENKELAEV) form a coiled coil. A disordered region spans residues 164–209 (DNFESLDNQEFDSEEETVEDSLVEDSEIGTCAEGTVSSSTDAKPCI). Positions 170–190 (DNQEFDSEEETVEDSLVEDSE) are homeodomain binding. The segment covering 170-190 (DNQEFDSEEETVEDSLVEDSE) has biased composition (acidic residues). Position 184 is a phosphoserine; by CK2 (S184). The span at 198–209 (TVSSSTDAKPCI) shows a compositional bias: polar residues.

Belongs to the geminin family. As to quaternary structure, homotetramer. Interacts with CDT1; this inhibits binding of the MCM complex to origins of replication. The complex with CDT1 exists in two forms, a 'permissive' heterotrimer and an 'inhibitory' heterohexamer. Interacts (via coiled-coil domain) with IDAS (via coiled-coil domain); this targets GMNN to the nucleus. The heterodimer formed by GMNN and MCIDAS has much lower affinity for CDT1 than the GMNN homodimer. Interacts with a subset of Hox proteins, affinity increasing from anterior to posterior types, the strongest interaction being with HOXB1, HOXC9 and HOXD10. Interacts with LRWD1 from G1/S to mitosis. Phosphorylated during mitosis. Phosphorylation at Ser-184 by CK2 results in enhanced binding to Hox proteins and more potent inhibitory effect on Hox transcriptional activity.

It is found in the cytoplasm. It localises to the nucleus. Inhibits DNA replication by preventing the incorporation of MCM complex into pre-replication complex (pre-RC). It is degraded during the mitotic phase of the cell cycle. Its destruction at the metaphase-anaphase transition permits replication in the succeeding cell cycle. Inhibits histone acetyltransferase activity of KAT7/HBO1 in a CDT1-dependent manner, inhibiting histone H4 acetylation and DNA replication licensing. Inhibits the transcriptional activity of a subset of Hox proteins, enrolling them in cell proliferative control. The sequence is that of Geminin (GMNN) from Homo sapiens (Human).